Consider the following 182-residue polypeptide: MSFSVKGRSLRGNNNGGTGTKCGRWNPTVEQLKILTDLFRAGLRTPTTDQIQKISTELSFYGKIESKNVFYWFQNHKARERQKRRKISIDFDHHHHQPSTRDVFEISEEDCQEEEKVIETLQLFPVNSFEDSNSKVDKMRARGNNQYREYIRETTTTSFSPYSSCGAEMEHPPPLDLRLSFL.

Residues 1 to 24 (MSFSVKGRSLRGNNNGGTGTKCGR) are disordered. A DNA-binding region (homeobox; WUS-type) is located at residues 20 to 84 (TKCGRWNPTV…NHKARERQKR (65 aa)).

Belongs to the WUS homeobox family. As to expression, specifically expressed in the central cells of a quiescent center (QC) of the root.

The protein localises to the nucleus. Functionally, transcription factor, which may be involved in the specification and maintenance of the stem cells (QC cells) in the root apical meristem (RAM). This Arabidopsis thaliana (Mouse-ear cress) protein is WUSCHEL-related homeobox 5 (WOX5).